Reading from the N-terminus, the 597-residue chain is Aspartate--tRNA(Asp/Asn) ligase (597 aa).

E176 is an L-aspartate binding site. The interval 200-203 is aspartate; the sequence is QQFK. Residues R222 and H451 each coordinate L-aspartate. 222 to 224 is an ATP binding site; that stretch reads RDE. E489 contacts ATP. An L-aspartate-binding site is contributed by R496. Position 541 to 544 (541 to 544) interacts with ATP; it reads GIDR.

Belongs to the class-II aminoacyl-tRNA synthetase family. Type 1 subfamily. As to quaternary structure, homodimer.

It localises to the cytoplasm. The enzyme catalyses tRNA(Asx) + L-aspartate + ATP = L-aspartyl-tRNA(Asx) + AMP + diphosphate. Functionally, aspartyl-tRNA synthetase with relaxed tRNA specificity since it is able to aspartylate not only its cognate tRNA(Asp) but also tRNA(Asn). Reaction proceeds in two steps: L-aspartate is first activated by ATP to form Asp-AMP and then transferred to the acceptor end of tRNA(Asp/Asn). This chain is Aspartate--tRNA(Asp/Asn) ligase, found in Orientia tsutsugamushi (strain Boryong) (Rickettsia tsutsugamushi).